The chain runs to 299 residues: DNA-binding transcriptional repressor CapW (299 aa).

Residues 1-15 show a composition bias toward basic and acidic residues; sequence MPDNFREGDKQDSQK. The interval 1–21 is disordered; sequence MPDNFREGDKQDSQKGRQGAR. Positions 1–95 are winged HTH domain; it reads MPDNFREGDK…LFQPVYMTSS (95 aa). The WYL domain stretch occupies residues 96-207; sequence LECYLNDLLQ…LSRIVQAQNA (112 aa). The region spanning 131-211 is the WYL domain; that stretch reads LRRLDTDVVS…VQAQNAGPDE (81 aa). Residues 156–200 are probable ligand-binding region; it reads YQSMSDPQGSKRTLTPHSLVHDGYRWHTRAWCHKRGEYRDFLLSR. The tract at residues 208–299 is WCX domain; it reads GPDEERANGD…KDEIYALLKQ (92 aa).

Homodimer.

Transcriptional regulator of a CBASS antivirus system. CBASS (cyclic oligonucleotide-based antiphage signaling system) provides immunity against bacteriophage. The CD-NTase protein synthesizes cyclic nucleotides in response to infection; these serve as specific second messenger signals. The signals activate a diverse range of effectors, leading to bacterial cell death and thus abortive phage infection. A type III CBASS system. Expression of this CBASS system (Cap18-Cap6-Cap7-CdnC-CapW-Cap17) in a susceptible E.coli (strain MG1655) confers resistance to bacteriophage P1. Binds specifically to and represses expression from the CBASS promoter, found between the genes for divergently transcribed capW and cdnC. This chain is DNA-binding transcriptional repressor CapW, found in Escherichia coli (strain KTE188).